We begin with the raw amino-acid sequence, 168 residues long: Sperm acrosome-associated protein 9 (168 aa).

In terms of assembly, microtubule inner protein component of sperm flagellar doublet microtubules. Interacts with CABP1 and CALR. Interacts with INCA1. Interacts with microtubules. As to expression, testis-specific. Expressed in round spermatids.

The protein localises to the cytoplasm. It is found in the cytoplasmic vesicle. It localises to the secretory vesicle. Its subcellular location is the acrosome. The protein resides in the cytoskeleton. The protein localises to the cilium basal body. It is found in the flagellum axoneme. It localises to the cilium axoneme. Its subcellular location is the nucleus. Its function is as follows. Microtubule inner protein (MIP) part of the dynein-decorated doublet microtubules (DMTs) of multiciliated respiratory cells and the distal singlet microtubules of monoflagellated spermatozoa. Forms an extensive interaction network cross-linking the lumen of axonemal doublet microtubules. In Rattus norvegicus (Rat), this protein is Sperm acrosome-associated protein 9 (Spaca9).